Reading from the N-terminus, the 253-residue chain is MMVKIQDSVYLVTGGGSGLGEATAKLLLTEGARVTIFSRNEYKNEFPHDQVLSVKGDVRSESDVKRALEATIQKFGKLDGVMHCAGVFQNGDELFNMDTQQPGDYTVLTDIVTTNLLGTFNVNRLAIPYFLTNQPDEEGQKGIIINCSSTSGHSPMSSAVAYSTSKAAIIGLSYALAKQLSTLGIRVMDIAPALCDTPMFRRAVGFNQDIANFRNLFPARLIQPIEYANAVKHIIETPMLNGSSYQLDGALRP.

NAD(+) is bound by residues 12–40 (VTGG…FSRN) and aspartate 63. Serine 149 provides a ligand contact to substrate. Tyrosine 162 functions as the Proton acceptor in the catalytic mechanism. Lysine 166 lines the NAD(+) pocket.

It belongs to the short-chain dehydrogenases/reductases (SDR) family. As to expression, specifically expressed in male midguts. Expressed at higher level in the anterior midgut of fed males.

The protein localises to the cytoplasm. Its subcellular location is the cytosol. It carries out the reaction (4R)-ipsdienol + NADP(+) = ipsdienone + NADPH + H(+). It catalyses the reaction (4R)-ipsdienol + NAD(+) = ipsdienone + NADH + H(+). Functionally, catalyzes the oxidation of racemic ipsdienol and (4R)-(-)-ipsdienol to form ipsdienone (2-methyl-6-methylene-2,7-octadien-4-one), an intermediate in the biosynthesis of pheromonal ipsdienol in male pine engraver beetles. In contrast, (4S)-(+)-ipsdienol is not a substrate. The sequence is that of Ipsdienol dehydrogenase from Ips pini (Pine engraver beetle).